A 275-amino-acid chain; its full sequence is Ribosomal RNA small subunit methyltransferase A (275 aa).

S-adenosyl-L-methionine is bound by residues N28, L30, G55, E77, D103, and N123.

It belongs to the class I-like SAM-binding methyltransferase superfamily. rRNA adenine N(6)-methyltransferase family. RsmA subfamily.

The protein resides in the cytoplasm. The catalysed reaction is adenosine(1518)/adenosine(1519) in 16S rRNA + 4 S-adenosyl-L-methionine = N(6)-dimethyladenosine(1518)/N(6)-dimethyladenosine(1519) in 16S rRNA + 4 S-adenosyl-L-homocysteine + 4 H(+). Functionally, specifically dimethylates two adjacent adenosines (A1518 and A1519) in the loop of a conserved hairpin near the 3'-end of 16S rRNA in the 30S particle. May play a critical role in biogenesis of 30S subunits. The sequence is that of Ribosomal RNA small subunit methyltransferase A from Rhizobium etli (strain CIAT 652).